Reading from the N-terminus, the 547-residue chain is Chaperonin GroEL (547 aa).

Residues 30-33 (TLGP), Lys-51, 87-91 (DGTTT), Gly-415, and Asp-496 contribute to the ATP site. The interval 525 to 547 (KPEPKSPAGGPGMGGMGGMDGMM) is disordered. Positions 533–547 (GGPGMGGMGGMDGMM) are enriched in gly residues.

This sequence belongs to the chaperonin (HSP60) family. Forms a cylinder of 14 subunits composed of two heptameric rings stacked back-to-back. Interacts with the co-chaperonin GroES.

The protein resides in the cytoplasm. The catalysed reaction is ATP + H2O + a folded polypeptide = ADP + phosphate + an unfolded polypeptide.. Together with its co-chaperonin GroES, plays an essential role in assisting protein folding. The GroEL-GroES system forms a nano-cage that allows encapsulation of the non-native substrate proteins and provides a physical environment optimized to promote and accelerate protein folding. The protein is Chaperonin GroEL of Cereibacter sphaeroides (strain ATCC 17029 / ATH 2.4.9) (Rhodobacter sphaeroides).